Consider the following 499-residue polypeptide: NADH-quinone oxidoreductase subunit 14 (499 aa).

A run of 14 helical transmembrane segments spans residues 9–29 (ILPE…GAYL), 37–57 (TLLW…GLGN), 76–96 (FAKV…ADYM), 104–124 (FEFP…VSAG), 126–146 (LLTL…VAAM), 161–181 (FVLG…VYGF), 196–216 (AGHL…GLSF), 235–255 (PTPV…ALIA), 269–289 (WSQI…IAGI), 301–321 (SSIA…AIGV), 324–344 (MLLY…FILS), 369–389 (ALAM…LGFF), 402–422 (GMGW…FYYL), and 446–466 (YLAL…MFGV).

Belongs to the complex I subunit 2 family. As to quaternary structure, NDH-1 is composed of at least 14 different subunits, Nqo1 to Nqo14. The complex has a L-shaped structure, with the hydrophobic arm (subunits Nqo7, Nqo8, Nqo10 to Nqo14) embedded in the inner membrane and the hydrophilic peripheral arm (subunits Nqo1 to Nqo6, Nqo9) protruding into the bacterial cytoplasm. The hydrophilic domain contains all the redox centers.

The protein localises to the cell inner membrane. It carries out the reaction a quinone + NADH + 5 H(+)(in) = a quinol + NAD(+) + 4 H(+)(out). NDH-1 shuttles electrons from NADH, via FMN and iron-sulfur (Fe-S) centers, to quinones in the respiratory chain. The immediate electron acceptor for the enzyme in this species is believed to be ubiquinone. Couples the redox reaction to proton translocation (for every two electrons transferred, four hydrogen ions are translocated across the cytoplasmic membrane), and thus conserves the redox energy in a proton gradient. The chain is NADH-quinone oxidoreductase subunit 14 from Paracoccus denitrificans.